Consider the following 45-residue polypeptide: uncharacterized protein (45 aa).

This is an uncharacterized protein from Bacillus subtilis (strain 168).